Reading from the N-terminus, the 923-residue chain is Protein prickle (923 aa).

Residues 1–196 are disordered; sequence MSYPYQKSHH…HPFHSPASAA (196 aa). Residues 11–34 show a composition bias toward low complexity; the sequence is QTQQPQQNGHPQHQLMLQQQQQAD. A compositionally biased stretch (basic residues) spans 37 to 49; that stretch reads PHHHHHHHVHHAT. 2 stretches are compositionally biased toward low complexity: residues 59 to 73 and 106 to 118; these read RSPLRSPQSPPLYSG and MPGMMPGQQPPGM. Over residues 122–134 the composition is skewed to gly residues; it reads LGGGGGGGGGGSA. Low complexity-rich tracts occupy residues 152-169 and 184-196; these read STVTNTSSTATNAPSARS and SSHHPFHSPASAA. A PET domain is found at 275–383; it reads GGGHNYSQSD…TVKQITTTLI (109 aa). 3 LIM zinc-binding domains span residues 382 to 446, 447 to 507, and 508 to 570; these read LICE…ETLK, PRCS…MFAE, and YCDY…GEPP. Disordered regions lie at residues 571 to 668 and 703 to 867; these read TPSD…LDLT and GPIA…SSAD. The segment covering 709–718 has biased composition (gly residues); the sequence is NGNGPTGGGP. Residues 738–748 show a composition bias toward polar residues; the sequence is ESPSFSGTNSP. Basic and acidic residues predominate over residues 777 to 786; it reads HSIKEVRFEG. The span at 792-805 shows a compositional bias: polar residues; it reads LPRTKSYCQRNGGQ. The span at 817–827 shows a compositional bias: acidic residues; it reads SDDDELAEDET. Basic and acidic residues predominate over residues 840 to 852; sequence QREQQRPVDDSDA. Positions 853–865 are enriched in low complexity; sequence RSVCSTCSSSSSS.

Belongs to the prickle / espinas / testin family. As to quaternary structure, interacts with dsh; PET and LIM domains interact with dsh DEP domain, in wing cells. Interacts with Vang in photoreceptor cells.

It is found in the cell membrane. Its function is as follows. Acts in a planar cell polarity (PCP) complex; polarization along the apical/basal axis of epithelial cells. PCP signaling in the wing disk requires the receptor fz and the cytoplasmic proteins dsh and pk. These act in a feedback loop leading to activation of the jnk cascade and subsequent polarized arrangement of hairs and bristles. Dgo and pk compete with one another for dsh binding, thereby modulating fz dsh activity and ensuring tight control over fz PCP signaling. Vang, stan and pk function together to regulate the establishment of tissue polarity in the adult eye. In Anopheles gambiae (African malaria mosquito), this protein is Protein prickle.